The following is a 351-amino-acid chain: Nitronate monooxygenase (351 aa).

FMN is bound by residues L21, N69, Q176, G181, G218, and 237-240 (QMGT).

This sequence belongs to the nitronate monooxygenase family. NMO class I subfamily. It depends on FMN as a cofactor.

It carries out the reaction 3 propionate 3-nitronate + 3 O2 + H2O = 3 3-oxopropanoate + 2 nitrate + nitrite + H2O2 + 3 H(+). Nitronate monooxygenase that uses molecular oxygen to catalyze the oxidative denitrification of alkyl nitronates. The toxin propionate 3-nitronate (P3N) is the best substrate (and the presumed physiological substrate), but this enzyme is also active on other primary and secondary nitronates such as propyl-1-nitronate, ethylnitronate, pentyl-1-nitronate, butyl-1-nitronate and propyl-2-nitronate. Is likely involved in the degradation of P3N, that allows P.aeruginosa PAO1 to grow on 3-nitropropionate/P3N as the sole nitrogen source. Also functions in the detoxification of P3N, a metabolic poison produced by plants and fungi as a defense mechanism. Cannot oxidize nitroalkanes such as 3-nitropropionate, nitroethane, 1-nitropropane, 1-nitrobutane, 1-nitropentane, or 2-nitropropane. This is Nitronate monooxygenase from Pseudomonas aeruginosa (strain ATCC 15692 / DSM 22644 / CIP 104116 / JCM 14847 / LMG 12228 / 1C / PRS 101 / PAO1).